We begin with the raw amino-acid sequence, 184 residues long: NADH-quinone oxidoreductase subunit B (184 aa).

Cys-37, Cys-38, Cys-103, and Cys-132 together coordinate [4Fe-4S] cluster.

Belongs to the complex I 20 kDa subunit family. NDH-1 is composed of 14 different subunits. Subunits NuoB, C, D, E, F, and G constitute the peripheral sector of the complex. It depends on [4Fe-4S] cluster as a cofactor.

The protein localises to the cell membrane. It carries out the reaction a quinone + NADH + 5 H(+)(in) = a quinol + NAD(+) + 4 H(+)(out). Functionally, NDH-1 shuttles electrons from NADH, via FMN and iron-sulfur (Fe-S) centers, to quinones in the respiratory chain. The immediate electron acceptor for the enzyme in this species is believed to be a menaquinone. Couples the redox reaction to proton translocation (for every two electrons transferred, four hydrogen ions are translocated across the cytoplasmic membrane), and thus conserves the redox energy in a proton gradient. This chain is NADH-quinone oxidoreductase subunit B, found in Mycobacteroides abscessus (strain ATCC 19977 / DSM 44196 / CCUG 20993 / CIP 104536 / JCM 13569 / NCTC 13031 / TMC 1543 / L948) (Mycobacterium abscessus).